The following is a 202-amino-acid chain: Glycerol-3-phosphate acyltransferase (202 aa).

6 helical membrane passes run 2-22, 54-74, 85-105, 120-140, 141-161, and 162-182; these read MIIV…GFVI, FLVT…PLWL, FFTN…YPVY, VVLG…FIIL, KIFK…VIGS, and LIIQ…ILII.

It belongs to the PlsY family. As to quaternary structure, probably interacts with PlsX.

It localises to the cell membrane. It catalyses the reaction an acyl phosphate + sn-glycerol 3-phosphate = a 1-acyl-sn-glycero-3-phosphate + phosphate. It functions in the pathway lipid metabolism; phospholipid metabolism. Its function is as follows. Catalyzes the transfer of an acyl group from acyl-phosphate (acyl-PO(4)) to glycerol-3-phosphate (G3P) to form lysophosphatidic acid (LPA). This enzyme utilizes acyl-phosphate as fatty acyl donor, but not acyl-CoA or acyl-ACP. This chain is Glycerol-3-phosphate acyltransferase, found in Staphylococcus aureus (strain bovine RF122 / ET3-1).